The following is a 375-amino-acid chain: Naringenin 7-O-methyltransferase (375 aa).

136–142 serves as a coordination point for substrate; sequence LNLDKVF. Positions 168–188 are substrate binding; the sequence is LFQYLGQDGNEPSNTLFNQAM. S-adenosyl-L-methionine-binding residues include G219, D242, M263, and K276. H280 functions as the Proton acceptor in the catalytic mechanism.

Belongs to the class I-like SAM-binding methyltransferase superfamily. Cation-independent O-methyltransferase family. COMT subfamily.

It catalyses the reaction (2S)-naringenin + S-adenosyl-L-methionine = (2S)-sakuranetin + S-adenosyl-L-homocysteine + H(+). S-adenosyl-L-methionine-dependent methyltransferase involved in the biosynthesis of the sakuranetin, an inducible defense mechanism of O.sativa against pathogen attack. In Oryza sativa subsp. japonica (Rice), this protein is Naringenin 7-O-methyltransferase.